Consider the following 206-residue polypeptide: Small ribosomal subunit protein uS4 (206 aa).

Residues 96 to 156 (SRLDNVVYRM…EKSRNQSRIA (61 aa)) form the S4 RNA-binding domain.

Belongs to the universal ribosomal protein uS4 family. In terms of assembly, part of the 30S ribosomal subunit. Contacts protein S5. The interaction surface between S4 and S5 is involved in control of translational fidelity.

One of the primary rRNA binding proteins, it binds directly to 16S rRNA where it nucleates assembly of the body of the 30S subunit. Functionally, with S5 and S12 plays an important role in translational accuracy. This chain is Small ribosomal subunit protein uS4, found in Hydrogenovibrio crunogenus (strain DSM 25203 / XCL-2) (Thiomicrospira crunogena).